A 196-amino-acid chain; its full sequence is Peptidyl-tRNA hydrolase (196 aa).

Y18 contacts tRNA. H23 functions as the Proton acceptor in the catalytic mechanism. Residues F69, N71, and N117 each contribute to the tRNA site.

This sequence belongs to the PTH family. In terms of assembly, monomer.

The protein resides in the cytoplasm. It catalyses the reaction an N-acyl-L-alpha-aminoacyl-tRNA + H2O = an N-acyl-L-amino acid + a tRNA + H(+). Hydrolyzes ribosome-free peptidyl-tRNAs (with 1 or more amino acids incorporated), which drop off the ribosome during protein synthesis, or as a result of ribosome stalling. In terms of biological role, catalyzes the release of premature peptidyl moieties from peptidyl-tRNA molecules trapped in stalled 50S ribosomal subunits, and thus maintains levels of free tRNAs and 50S ribosomes. The polypeptide is Peptidyl-tRNA hydrolase (Marinobacter nauticus (strain ATCC 700491 / DSM 11845 / VT8) (Marinobacter aquaeolei)).